Consider the following 373-residue polypeptide: Cytoplasmic tRNA 2-thiolation protein 1 (373 aa).

The protein belongs to the TtcA family. CTU1/NCS6/ATPBD3 subfamily.

Its subcellular location is the cytoplasm. The protein operates within tRNA modification; 5-methoxycarbonylmethyl-2-thiouridine-tRNA biosynthesis. Functionally, plays a central role in 2-thiolation of mcm(5)S(2)U at tRNA wobble positions of tRNA(Lys), tRNA(Glu) and tRNA(Gln). Directly binds tRNAs and probably acts by catalyzing adenylation of tRNAs, an intermediate required for 2-thiolation. It is unclear whether it acts as a sulfurtransferase that transfers sulfur from thiocarboxylated URM1 onto the uridine of tRNAs at wobble position. Prior mcm(5) tRNA modification by the elongator complex is required for 2-thiolation. May also be involved in protein urmylation. The polypeptide is Cytoplasmic tRNA 2-thiolation protein 1 (Eremothecium gossypii (strain ATCC 10895 / CBS 109.51 / FGSC 9923 / NRRL Y-1056) (Yeast)).